The chain runs to 230 residues: 2-C-methyl-D-erythritol 4-phosphate cytidylyltransferase (230 aa).

The protein belongs to the IspD/TarI cytidylyltransferase family. IspD subfamily.

The catalysed reaction is 2-C-methyl-D-erythritol 4-phosphate + CTP + H(+) = 4-CDP-2-C-methyl-D-erythritol + diphosphate. It functions in the pathway isoprenoid biosynthesis; isopentenyl diphosphate biosynthesis via DXP pathway; isopentenyl diphosphate from 1-deoxy-D-xylulose 5-phosphate: step 2/6. Catalyzes the formation of 4-diphosphocytidyl-2-C-methyl-D-erythritol from CTP and 2-C-methyl-D-erythritol 4-phosphate (MEP). In Nocardia farcinica (strain IFM 10152), this protein is 2-C-methyl-D-erythritol 4-phosphate cytidylyltransferase.